Reading from the N-terminus, the 83-residue chain is Large ribosomal subunit protein eL31 (83 aa).

This sequence belongs to the eukaryotic ribosomal protein eL31 family.

This Methanococcus maripaludis (strain DSM 14266 / JCM 13030 / NBRC 101832 / S2 / LL) protein is Large ribosomal subunit protein eL31.